Reading from the N-terminus, the 222-residue chain is MKKAVVLLSGGLDSATCLAIARDQGYACHTIAFDYGQRTRSELDAAERVSGVLGALSHRVIELGMGNIGGSALTDHSIEVPENGGDGIPVTYVPARNTVFLSLALGLAEVIDAQAIFIGVNAVDYSGYPDCRPAFIEAFQSMATLATKAGVEGRPMQIETPLMHLSKAQIIQRGVALGLDYGLTVSCYQADDHGNACGKCDSCRLRSQGFEDALVKDPTNYQ.

8–18 (LSGGLDSATCL) is a binding site for ATP. Zn(2+) contacts are provided by C187, C197, C200, and C203.

Belongs to the QueC family. Zn(2+) serves as cofactor.

The catalysed reaction is 7-carboxy-7-deazaguanine + NH4(+) + ATP = 7-cyano-7-deazaguanine + ADP + phosphate + H2O + H(+). It functions in the pathway purine metabolism; 7-cyano-7-deazaguanine biosynthesis. In terms of biological role, catalyzes the ATP-dependent conversion of 7-carboxy-7-deazaguanine (CDG) to 7-cyano-7-deazaguanine (preQ(0)). In Alcanivorax borkumensis (strain ATCC 700651 / DSM 11573 / NCIMB 13689 / SK2), this protein is 7-cyano-7-deazaguanine synthase.